Reading from the N-terminus, the 242-residue chain is Trypsin-1 (242 aa).

An N-terminal signal peptide occupies residues 1 to 15 (MISLVFVLLIGAAFA). Residues 16–20 (TEDDK) constitute a propeptide, activation peptide. A Peptidase S1 domain is found at 21-240 (IVGGYECKAY…FNDWLTSTMA (220 aa)). 6 cysteine pairs are disulfide-bonded: Cys27–Cys156, Cys45–Cys61, Cys129–Cys229, Cys136–Cys202, Cys167–Cys181, and Cys192–Cys216. His60 (charge relay system) is an active-site residue. Ca(2+) is bound by residues Glu72, Asn74, Val77, and Glu82. Residue Asp104 is the Charge relay system of the active site. Ser196 acts as the Charge relay system in catalysis.

It belongs to the peptidase S1 family. It depends on Ca(2+) as a cofactor.

The protein localises to the secreted. Its subcellular location is the extracellular space. The enzyme catalyses Preferential cleavage: Arg-|-Xaa, Lys-|-Xaa.. The protein is Trypsin-1 of Salmo salar (Atlantic salmon).